A 125-amino-acid chain; its full sequence is Small ribosomal subunit protein uS13 (125 aa).

The segment at 90–125 (QRHRKGLPVRGQRTKTNARTRKGPKRTVAGKKKATK) is disordered.

This sequence belongs to the universal ribosomal protein uS13 family. In terms of assembly, part of the 30S ribosomal subunit. Forms a loose heterodimer with protein S19. Forms two bridges to the 50S subunit in the 70S ribosome.

In terms of biological role, located at the top of the head of the 30S subunit, it contacts several helices of the 16S rRNA. In the 70S ribosome it contacts the 23S rRNA (bridge B1a) and protein L5 of the 50S subunit (bridge B1b), connecting the 2 subunits; these bridges are implicated in subunit movement. Contacts the tRNAs in the A and P-sites. This chain is Small ribosomal subunit protein uS13, found in Bifidobacterium longum (strain DJO10A).